A 154-amino-acid chain; its full sequence is Nuclear cap-binding protein subunit 2 (154 aa).

MRNA is bound by residues Tyr10, Tyr33, 102-106 (RCDWD), 113-117 (RQYGR), and 123-124 (QV). The region spanning 30–108 (STLYMGNLSF…RIIRCDWDAG (79 aa)) is the RRM domain.

This sequence belongs to the RRM NCBP2 family. In terms of assembly, component of the nuclear cap-binding complex (CBC), a heterodimer composed of Cbp80 and Cbp20 that interacts with m7GpppG-capped RNA.

It localises to the nucleus. Functionally, component of the cap-binding complex (CBC), which binds co-transcriptionally to the 5' cap of pre-mRNAs and is involved in various processes such as pre-mRNA splicing and RNA-mediated gene silencing (RNAi). The CBC complex is involved in miRNA-mediated RNA interference and is required for primary microRNAs (miRNAs) processing. Also involved in innate immunity via the short interfering RNAs (siRNAs) processing machinery by restricting the viral RNA production. In the CBC complex, Cbp20 recognizes and binds capped RNAs (m7GpppG-capped RNA) but requires Cbp80 to stabilize the movement of its N-terminal loop and lock the CBC into a high affinity cap-binding state with the cap structure. This Bombyx mori (Silk moth) protein is Nuclear cap-binding protein subunit 2.